We begin with the raw amino-acid sequence, 366 residues long: Beta sliding clamp (366 aa).

The protein belongs to the beta sliding clamp family. As to quaternary structure, forms a ring-shaped head-to-tail homodimer around DNA which binds and tethers DNA polymerases and other proteins to the DNA. The DNA replisome complex has a single clamp-loading complex (3 tau and 1 each of delta, delta', psi and chi subunits) which binds 3 Pol III cores (1 core on the leading strand and 2 on the lagging strand) each with a beta sliding clamp dimer. Additional proteins in the replisome are other copies of gamma, psi and chi, Ssb, DNA helicase and RNA primase.

It is found in the cytoplasm. Its function is as follows. Confers DNA tethering and processivity to DNA polymerases and other proteins. Acts as a clamp, forming a ring around DNA (a reaction catalyzed by the clamp-loading complex) which diffuses in an ATP-independent manner freely and bidirectionally along dsDNA. Initially characterized for its ability to contact the catalytic subunit of DNA polymerase III (Pol III), a complex, multichain enzyme responsible for most of the replicative synthesis in bacteria; Pol III exhibits 3'-5' exonuclease proofreading activity. The beta chain is required for initiation of replication as well as for processivity of DNA replication. The polypeptide is Beta sliding clamp (dnaN) (Chlamydia muridarum (strain MoPn / Nigg)).